A 346-amino-acid chain; its full sequence is N-acetyl-gamma-glutamyl-phosphate reductase (346 aa).

Residue Cys-150 is part of the active site.

It belongs to the NAGSA dehydrogenase family. Type 1 subfamily.

The protein localises to the cytoplasm. It carries out the reaction N-acetyl-L-glutamate 5-semialdehyde + phosphate + NADP(+) = N-acetyl-L-glutamyl 5-phosphate + NADPH + H(+). The protein operates within amino-acid biosynthesis; L-arginine biosynthesis; N(2)-acetyl-L-ornithine from L-glutamate: step 3/4. Its function is as follows. Catalyzes the NADPH-dependent reduction of N-acetyl-5-glutamyl phosphate to yield N-acetyl-L-glutamate 5-semialdehyde. This chain is N-acetyl-gamma-glutamyl-phosphate reductase, found in Desulforudis audaxviator (strain MP104C).